Reading from the N-terminus, the 675-residue chain is MNNNGNALSRTALTPTNNKVISGDLVTNGLPPIDNNIICSNGFMPINVTRKNPFRKRTTQEFIREWTEWKENSPSLFTAPIVGVVTSTLLEALKKQVQSRLLLLMTNLLFPNNSTSTMEEILRATEQYVQEQLDTVTWNRVSQELEGLKNNLRTFNDQIDDFLQNRVEISPTAMIDSINTMQQVFVNRLPQFQLSDYQLLLLPLFAQGATLHLTFIRDIIINAGEWNIPEAQLNTCKRYLKQYVAQYSNYALSTYEGAFRARFYPRATLENMLQFKTFMTLNVLDLVSIWSLLKYMNLYISTSANLYNIGDNKVNEGEYSISYWPFFNSYIQTKSNYVLSGVSGYAIRWYYLNTFFGEYIQDNLYNIIASYVGGVNGPKIGVQLSTTELDKQIKQQARAGMPTGLDDLSFNCTLRNPTTVPYFACNFQELTSSGTAGTGGFIRSDVFRSEDNICGLGTGYASAWTSYPDYYITNISATVQVDGINIDITPLCFGEDRAITSTHGVNKVIAVYNRKANIAGTNQNGTMIHQAPNDGTGFTVSPLHLASFTHPSEAHIQENYGNSGDSLRLTGPTTAITYMLSGDGRTIYKLVLRVSGVITRITAKVRGNSIGYLEYINTVDNNQGITDNGSKFQDFEFRPTITIDAQTPIVLEFSATSNFDLMNLIFIPYYDTPIY.

This sequence belongs to the delta endotoxin family.

Its function is as follows. Binds to the brush border membrane vesicles of scarab larvae and damages the gut wall somehow to allow the vegetative cells of P.popilliae to enter the hemolymph. This chain is Parasporal crystal protein Cry18Ba (cry18Ba), found in Paenibacillus popilliae (Bacillus popilliae).